The primary structure comprises 396 residues: Small ribosomal subunit protein mS27 (396 aa).

This sequence belongs to the mitochondrion-specific ribosomal protein mS27 family. As to quaternary structure, component of the mitochondrial small ribosomal subunit (mt-SSU). Mature N.crassa 74S mitochondrial ribosomes consist of a small (37S) and a large (54S) subunit. The 37S small subunit contains a 16S ribosomal RNA (16S mt-rRNA) and 32 different proteins. The 54S large subunit contains a 23S rRNA (23S mt-rRNA) and 42 different proteins.

Its subcellular location is the mitochondrion. Functionally, component of the mitochondrial ribosome (mitoribosome), a dedicated translation machinery responsible for the synthesis of mitochondrial genome-encoded proteins, including at least some of the essential transmembrane subunits of the mitochondrial respiratory chain. The mitoribosomes are attached to the mitochondrial inner membrane and translation products are cotranslationally integrated into the membrane. This chain is Small ribosomal subunit protein mS27 (mrp13), found in Neurospora crassa (strain ATCC 24698 / 74-OR23-1A / CBS 708.71 / DSM 1257 / FGSC 987).